The chain runs to 248 residues: UPF0246 protein RAF_ORF0648 (248 aa).

This sequence belongs to the UPF0246 family.

The protein is UPF0246 protein RAF_ORF0648 of Rickettsia africae (strain ESF-5).